Consider the following 72-residue polypeptide: Large ribosomal subunit protein uL29 (72 aa).

Belongs to the universal ribosomal protein uL29 family.

The protein is Large ribosomal subunit protein uL29 of Prochlorococcus marinus (strain AS9601).